The sequence spans 157 residues: Small ribosomal subunit protein uS7 (157 aa).

Belongs to the universal ribosomal protein uS7 family. In terms of assembly, part of the 30S ribosomal subunit. Contacts proteins S9 and S11.

Functionally, one of the primary rRNA binding proteins, it binds directly to 16S rRNA where it nucleates assembly of the head domain of the 30S subunit. Is located at the subunit interface close to the decoding center, probably blocks exit of the E-site tRNA. The polypeptide is Small ribosomal subunit protein uS7 (Delftia acidovorans (strain DSM 14801 / SPH-1)).